The following is a 66-amino-acid chain: DNA-directed RNA polymerase subunit Rpo10 (66 aa).

Residues Cys7, Cys10, Cys44, and Cys45 each contribute to the Zn(2+) site.

This sequence belongs to the archaeal Rpo10/eukaryotic RPB10 RNA polymerase subunit family. In terms of assembly, part of the RNA polymerase complex. Zn(2+) serves as cofactor.

The protein resides in the cytoplasm. It catalyses the reaction RNA(n) + a ribonucleoside 5'-triphosphate = RNA(n+1) + diphosphate. DNA-dependent RNA polymerase (RNAP) catalyzes the transcription of DNA into RNA using the four ribonucleoside triphosphates as substrates. The protein is DNA-directed RNA polymerase subunit Rpo10 of Pyrobaculum neutrophilum (strain DSM 2338 / JCM 9278 / NBRC 100436 / V24Sta) (Thermoproteus neutrophilus).